The following is a 207-amino-acid chain: Succinyl-CoA:3-ketoacid coenzyme A transferase subunit B (207 aa).

Glutamate 43 is an active-site residue.

Belongs to the 3-oxoacid CoA-transferase subunit B family. In terms of assembly, heterodimer of a subunit A and a subunit B.

The catalysed reaction is a 3-oxo acid + succinyl-CoA = a 3-oxoacyl-CoA + succinate. This chain is Succinyl-CoA:3-ketoacid coenzyme A transferase subunit B (scoB), found in Helicobacter pylori (strain ATCC 700392 / 26695) (Campylobacter pylori).